Reading from the N-terminus, the 108-residue chain is CDGSH iron-sulfur domain-containing protein 1 (108 aa).

The helical; Signal-anchor for type III membrane protein transmembrane segment at 14–31 (IAAVTFAAGTAALGYLAY) threads the bilayer. Over 32–108 (KKFYAKENRT…GPLIIKKKET (77 aa)) the chain is Cytoplasmic. A Glycyl lysine isopeptide (Lys-Gly) (interchain with G-Cter in ubiquitin) cross-link involves residue K42. K55 acts as the Schiff-base intermediate with pyridoxal 5'-phosphate in catalysis. Residues K55 and K68 each carry the N6-acetyllysine; alternate modification. Glycyl lysine isopeptide (Lys-Gly) (interchain with G-Cter in ubiquitin); alternate cross-links involve residues K55 and K68. The [2Fe-2S] cluster site is built by C72 and C74. Residues K78 and K79 each participate in a glycyl lysine isopeptide (Lys-Gly) (interchain with G-Cter in ubiquitin) cross-link. [2Fe-2S] cluster is bound by residues C83 and H87. K89 participates in a covalent cross-link: Glycyl lysine isopeptide (Lys-Gly) (interchain with G-Cter in ubiquitin). K104 is subject to N6-acetyllysine; alternate. K104 is covalently cross-linked (Glycyl lysine isopeptide (Lys-Gly) (interchain with G-Cter in ubiquitin); alternate). Glycyl lysine isopeptide (Lys-Gly) (interchain with G-Cter in ubiquitin) cross-links involve residues K105 and K106.

It belongs to the CISD protein family. As to quaternary structure, homodimer. [2Fe-2S] cluster is required as a cofactor. The cofactor is pyridoxal 5'-phosphate. Ubiquitinated by PRKN during mitophagy, leading to its degradation and enhancement of mitophagy. Deubiquitinated by USP30. Liver, adipose, skeletal muscle and heart (at protein level). Widely expressed. Expressed at the highest levels in the heart.

It is found in the mitochondrion outer membrane. The catalysed reaction is L-cysteine + 2-oxoglutarate = 2-oxo-3-sulfanylpropanoate + L-glutamate. Functionally, L-cysteine transaminase that catalyzes the reversible transfer of the amino group from L-cysteine to the alpha-keto acid 2-oxoglutarate to respectively form 2-oxo-3-sulfanylpropanoate and L-glutamate. The catalytic cycle occurs in the presence of pyridoxal 5'-phosphate (PLP) cofactor that facilitates transamination by initially forming an internal aldimine with the epsilon-amino group of active site Lys-55 residue on the enzyme (PLP-enzyme aldimine), subsequently displaced by formation of an external aldimine with the substrate amino group (PLP-L-cysteine aldimine). The external aldimine is further deprotonated to form a carbanion intermediate, which in the presence of 2-oxoglutarate regenerates PLP yielding final products 2-oxo-3-sulfanylpropanoate and L-glutamate. The proton transfer in carbanion intermediate is suggested to be controlled by the active site lysine residue, whereas PLP stabilizes carbanion structure through electron delocalization, also known as the electron sink effect. Plays a key role in regulating maximal capacity for electron transport and oxidative phosphorylation. May be involved in iron-sulfur cluster shuttling and/or in redox reactions. Can transfer the [2Fe-2S] cluster to an apo-acceptor protein only when in the oxidation state, likely serving as a redox sensor that regulates mitochondrial iron-sulfur cluster assembly and iron trafficking upon oxidative stress. The polypeptide is CDGSH iron-sulfur domain-containing protein 1 (Cisd1) (Mus musculus (Mouse)).